The sequence spans 181 residues: Thioredoxin-like protein CITRX1, chloroplastic (181 aa).

The disordered stretch occupies residues 1-20; it reads MQAATLSFHPSAPPPQTSAC. A chloroplast-targeting transit peptide spans 1 to 70; that stretch reads MQAATLSFHP…PAVATGKYVR (70 aa). The 111-residue stretch at 71–181 folds into the Thioredoxin domain; it reads EDYLVKKVSA…MMRDIINNDL (111 aa). Active-site nucleophile residues include Cys104 and Cys107. Cys104 and Cys107 are joined by a disulfide.

The protein belongs to the thioredoxin family. Plant CITRX-type subfamily.

Its subcellular location is the plastid. It localises to the chloroplast. Probable thiol-disulfide oxidoreductase that may play a role in proper chloroplast development. This is Thioredoxin-like protein CITRX1, chloroplastic from Nicotiana benthamiana.